The chain runs to 447 residues: UDP-N-acetyl-alpha-D-muramoyl-L-alanyl-L-glutamate epimerase (447 aa).

Belongs to the MurL family.

The catalysed reaction is UDP-N-acetyl-alpha-D-muramoyl-L-alanyl-L-glutamate + ATP + H2O = UDP-N-acetyl-alpha-D-muramoyl-L-alanyl-D-glutamate + AMP + diphosphate + H(+). The protein operates within cell wall biogenesis; peptidoglycan biosynthesis. Functionally, cell wall formation. Catalyzes epimerization of the terminal L-glutamate in UDP-N-acetyl-alpha-D-muramoyl-L-alanyl-L-glutamate. In Micromonospora sp. (strain ATCC 39149 / NRRL 15099 / SCC 1413), this protein is UDP-N-acetyl-alpha-D-muramoyl-L-alanyl-L-glutamate epimerase.